The sequence spans 491 residues: Carboxypeptidase SOL1 (491 aa).

Residues 1–25 (MSKLRFFQSLLISTVICFFLPSINA) form the signal peptide. The Extracellular portion of the chain corresponds to 26-452 (RGGHSDHIHP…LLTQFFTETN (427 aa)). Asparagine 39 is a glycosylation site (N-linked (GlcNAc...) asparagine). Residues 64–338 (GYMTNDDLEK…KSMLNLVASL (275 aa)) form the Peptidase M14 domain. Positions 125 and 128 each coordinate Zn(2+). Residues 125-128 (HGDE) and 186-187 (NR) contribute to the substrate site. Histidine 226 provides a ligand contact to Zn(2+). Asparagine 268 is a glycosylation site (N-linked (GlcNAc...) asparagine). Tyrosine 286 contacts substrate. The active-site Proton donor/acceptor is glutamate 308. Residues 453 to 470 (NGITLTLFVVVVFLCFLL) traverse the membrane as a helical segment. At 471–491 (QRRVRFNLWKQRQSSRRSITV) the chain is on the cytoplasmic side.

This sequence belongs to the peptidase M14 family. Requires Zn(2+) as cofactor. Expressed in roots, shoots, leaves, flowers and siliques.

It localises to the endosome membrane. Possesses in vitro carboxypeptidase activity against the C-terminal arginine and lysine residues. Involved in the maturation of CLE19. Removes the C-terminal arginine residue of CLE19 proprotein. The cleavage of the C-terminal arginine residue is necessary for CLE19 activity in vivo. Is not involved in generating active CLV3. Is not involved in CLE19 or CLV3 perception. The sequence is that of Carboxypeptidase SOL1 from Arabidopsis thaliana (Mouse-ear cress).